A 150-amino-acid chain; its full sequence is Macrodomain Ter protein (150 aa).

It belongs to the MatP family. Homodimer.

The protein resides in the cytoplasm. Required for spatial organization of the terminus region of the chromosome (Ter macrodomain) during the cell cycle. Prevents early segregation of duplicated Ter macrodomains during cell division. Binds specifically to matS, which is a 13 bp signature motif repeated within the Ter macrodomain. In Klebsiella pneumoniae (strain 342), this protein is Macrodomain Ter protein.